A 1083-amino-acid polypeptide reads, in one-letter code: Ubiquitin carboxyl-terminal hydrolase 1 (1083 aa).

The UBP-type zinc-finger motif lies at 30 to 165; the sequence is RSCVHFDKYV…KKDLLLEVVK (136 aa). Zn(2+) is bound by residues Cys-32, His-34, Cys-56, Cys-59, Cys-95, Cys-98, Cys-103, His-115, His-119, His-125, Cys-139, and Cys-142. One can recognise a USP domain in the interval 202–1083; it reads RGLVNLGNTC…EAYILFYERI (882 aa). Catalysis depends on Cys-211, which acts as the Nucleophile. 2 disordered regions span residues 387–424 and 450–486; these read KDSEVVSAKPASDHNSTVPLFPSDHKIQSRPETSDNET and GSTETLMHDNDRTGKTVPDKEDVRATQSNEETSASGI. Basic and acidic residues-rich tracts occupy residues 409-419 and 455-473; these read SDHKIQSRPET and LMHDNDRTGKTVPDKEDVR. Residues 474–485 show a composition bias toward polar residues; that stretch reads ATQSNEETSASG. His-1029 acts as the Proton acceptor in catalysis.

This sequence belongs to the peptidase C19 family.

It carries out the reaction Thiol-dependent hydrolysis of ester, thioester, amide, peptide and isopeptide bonds formed by the C-terminal Gly of ubiquitin (a 76-residue protein attached to proteins as an intracellular targeting signal).. Functionally, recognizes and hydrolyzes the peptide bond at the C-terminal Gly of ubiquitin. Involved in the processing of poly-ubiquitin precursors as well as that of ubiquitinated proteins. Is involved in resistance to the arginine analog canavanine (CAN). This chain is Ubiquitin carboxyl-terminal hydrolase 1 (UBP1), found in Arabidopsis thaliana (Mouse-ear cress).